Consider the following 428-residue polypeptide: Bifunctional protein GlmU (428 aa).

Residues 1–221 form a pyrophosphorylase region; that stretch reads MDIVILAAGC…ERKAMGINTR (221 aa). UDP-N-acetyl-alpha-D-glucosamine-binding positions include 6-9, K20, Q74, 79-80, 103-105, G140, and N219; these read LAAG, GT, and YGD. A Mg(2+)-binding site is contributed by D105. N219 is a binding site for Mg(2+). Residues 222-242 are linker; it reads ADLAIAESYFQCMKRASFLQS. The N-acetyltransferase stretch occupies residues 243-428; it reads GVTLTSPDQV…TTKPEYKTRR (186 aa). Residues R308 and K326 each coordinate UDP-N-acetyl-alpha-D-glucosamine. The active-site Proton acceptor is H338. Residues Y341 and N352 each coordinate UDP-N-acetyl-alpha-D-glucosamine. Acetyl-CoA is bound by residues A355, 361–362, A398, and R415; that span reads NY.

This sequence in the N-terminal section; belongs to the N-acetylglucosamine-1-phosphate uridyltransferase family. The protein in the C-terminal section; belongs to the transferase hexapeptide repeat family. Homotrimer. Requires Mg(2+) as cofactor.

It is found in the cytoplasm. The catalysed reaction is alpha-D-glucosamine 1-phosphate + acetyl-CoA = N-acetyl-alpha-D-glucosamine 1-phosphate + CoA + H(+). It catalyses the reaction N-acetyl-alpha-D-glucosamine 1-phosphate + UTP + H(+) = UDP-N-acetyl-alpha-D-glucosamine + diphosphate. It functions in the pathway nucleotide-sugar biosynthesis; UDP-N-acetyl-alpha-D-glucosamine biosynthesis; N-acetyl-alpha-D-glucosamine 1-phosphate from alpha-D-glucosamine 6-phosphate (route II): step 2/2. It participates in nucleotide-sugar biosynthesis; UDP-N-acetyl-alpha-D-glucosamine biosynthesis; UDP-N-acetyl-alpha-D-glucosamine from N-acetyl-alpha-D-glucosamine 1-phosphate: step 1/1. The protein operates within bacterial outer membrane biogenesis; LPS lipid A biosynthesis. Functionally, catalyzes the last two sequential reactions in the de novo biosynthetic pathway for UDP-N-acetylglucosamine (UDP-GlcNAc). The C-terminal domain catalyzes the transfer of acetyl group from acetyl coenzyme A to glucosamine-1-phosphate (GlcN-1-P) to produce N-acetylglucosamine-1-phosphate (GlcNAc-1-P), which is converted into UDP-GlcNAc by the transfer of uridine 5-monophosphate (from uridine 5-triphosphate), a reaction catalyzed by the N-terminal domain. The sequence is that of Bifunctional protein GlmU from Anaplasma marginale (strain Florida).